Reading from the N-terminus, the 205-residue chain is dITP/XTP pyrophosphatase (205 aa).

11–16 (TKNMGK) contacts substrate. Glu-44 and Asp-73 together coordinate Mg(2+). Asp-73 serves as the catalytic Proton acceptor. Substrate is bound by residues Ser-74, 158-161 (FGYD), Lys-181, and 186-187 (HR).

Belongs to the HAM1 NTPase family. As to quaternary structure, homodimer. Mg(2+) serves as cofactor.

The catalysed reaction is XTP + H2O = XMP + diphosphate + H(+). It catalyses the reaction dITP + H2O = dIMP + diphosphate + H(+). The enzyme catalyses ITP + H2O = IMP + diphosphate + H(+). Functionally, pyrophosphatase that catalyzes the hydrolysis of nucleoside triphosphates to their monophosphate derivatives, with a high preference for the non-canonical purine nucleotides XTP (xanthosine triphosphate), dITP (deoxyinosine triphosphate) and ITP. Seems to function as a house-cleaning enzyme that removes non-canonical purine nucleotides from the nucleotide pool, thus preventing their incorporation into DNA/RNA and avoiding chromosomal lesions. This chain is dITP/XTP pyrophosphatase, found in Bacillus thuringiensis subsp. konkukian (strain 97-27).